The sequence spans 1051 residues: Probable valine--tRNA ligase, mitochondrial (1051 aa).

A mitochondrion-targeting transit peptide spans 1–20 (MNKLLFLSKKSSTSNLYRFY). Residues 71-81 (PNVTGSLHIGH) carry the 'HIGH' region motif. The 'KMSKS' region motif lies at 606–610 (KMSKS). Lysine 609 contacts ATP. Residues 972–1019 (KELQISIEFDKEINNQLNQKLINPNQSNDKKILKLENFIKQLQDEIDN) adopt a coiled-coil conformation.

The protein belongs to the class-I aminoacyl-tRNA synthetase family.

It localises to the mitochondrion. The catalysed reaction is tRNA(Val) + L-valine + ATP = L-valyl-tRNA(Val) + AMP + diphosphate. This chain is Probable valine--tRNA ligase, mitochondrial (valS2), found in Dictyostelium discoideum (Social amoeba).